A 253-amino-acid chain; its full sequence is MKILVAVKRVVDYAVKVRVRPDRTGVETASVKMSMNPFCEIAVEEALRLRESGAATEVVAATVGPSQSADTLRTALAMGADRAVHVLHDPDPSRPLLPLAVAKILRALALQENPGLVILGKQAIDDDCNQTGQMLAGLLNWPQGTFASKVILNKEKATVEREVDGGIETISLDLPAVITTDLRLNQPRYATLPNIMKAKSKVIKKVTPEDLDVDIRSDMEVVEVTEPPKRKAGVILSSVDELVDRLKNEARVL.

It belongs to the ETF beta-subunit/FixA family. As to quaternary structure, heterodimer of an alpha and a beta subunit. FAD is required as a cofactor. The cofactor is AMP.

It localises to the mitochondrion matrix. Its function is as follows. The electron transfer flavoprotein serves as a specific electron acceptor for several dehydrogenases, including five acyl-CoA dehydrogenases, glutaryl-CoA and sarcosine dehydrogenase. It transfers the electrons to the main mitochondrial respiratory chain via ETF-ubiquinone oxidoreductase (ETF dehydrogenase). In Oryza sativa subsp. japonica (Rice), this protein is Electron transfer flavoprotein subunit beta, mitochondrial (ETFB).